A 160-amino-acid polypeptide reads, in one-letter code: Cytochrome b6-f complex subunit 4 (160 aa).

The next 3 membrane-spanning stretches (helical) occupy residues 36–56 (LLYI…GLAV), 95–115 (LLGV…PFLE), and 131–151 (TVFL…TLPI).

Belongs to the cytochrome b family. PetD subfamily. In terms of assembly, the 4 large subunits of the cytochrome b6-f complex are cytochrome b6, subunit IV (17 kDa polypeptide, petD), cytochrome f and the Rieske protein, while the 4 small subunits are petG, petL, petM and petN. The complex functions as a dimer.

Its subcellular location is the plastid. It is found in the chloroplast thylakoid membrane. In terms of biological role, component of the cytochrome b6-f complex, which mediates electron transfer between photosystem II (PSII) and photosystem I (PSI), cyclic electron flow around PSI, and state transitions. The sequence is that of Cytochrome b6-f complex subunit 4 from Solanum bulbocastanum (Wild potato).